The chain runs to 481 residues: UDP-glycosyltransferase 72E3 (481 aa).

Residue His-18 is the Proton acceptor of the active site. An an anthocyanidin-binding site is contributed by His-18. Residue Asp-111 is the Charge relay of the active site. UDP-alpha-D-glucose is bound by residues Ala-346, Gln-348, His-363, Trp-366, Ser-368, and Glu-371. An anthocyanidin is bound at residue Ala-386. Glu-387 and Gln-388 together coordinate UDP-alpha-D-glucose.

The protein belongs to the UDP-glycosyltransferase family. As to expression, expressed in seedlings and roots, and at lower levels in flowers and siliques.

The enzyme catalyses (E)-4-coumarate + UDP-alpha-D-glucose = 4-O-(beta-D-glucosyl)-trans-4-coumarate + UDP + H(+). The catalysed reaction is (E)-sinapyl alcohol + UDP-alpha-D-glucose = 4-O-(beta-D-glucosyl)-trans-4-sinapoyl alcohol + UDP + H(+). It catalyses the reaction (E)-coniferol + UDP-alpha-D-glucose = 4-O-(beta-D-glucosyl)-(E)-coniferol + UDP + H(+). It carries out the reaction (E)-sinapate + UDP-alpha-D-glucose = 4-O-(beta-D-glucosyl)-trans-sinapate + UDP + H(+). The enzyme catalyses (E)-coniferaldehyde + UDP-alpha-D-glucose = 4-O-(beta-D-glucosyl)-4-(E)-coniferyl aldehyde + UDP + H(+). The catalysed reaction is (E)-sinapaldehyde + UDP-alpha-D-glucose = 4-O-(beta-D-glucosyl)-4-trans-sinapoyl aldehyde + UDP + H(+). In terms of biological role, involved in the O-glucosylation of monolignols (alcohol monomers of lignin). Glucosylates coniferyl alcohol to form coniferyl alcohol 4-O-glucoside. Glucosylates sinapyl alcohol to form sinapyl alcohol 4-O-glucoside. Possesses low activity with sinapate as substrate. The protein is UDP-glycosyltransferase 72E3 of Arabidopsis thaliana (Mouse-ear cress).